A 335-amino-acid chain; its full sequence is Phospho-N-acetylmuramoyl-pentapeptide-transferase (335 aa).

A run of 10 helical transmembrane segments spans residues 3-23 (LTIL…PHFI), 53-73 (GGTV…LVYF), 78-98 (SLGL…IGFL), 118-138 (FTLQ…PSGI), 143-163 (VFGY…FWVV), 174-194 (GIDG…GVIA), 200-220 (FDVL…FLFN), 226-246 (IFMG…ISIA), 251-271 (WTLL…MLQV), and 314-334 (VDAF…AILY).

The protein belongs to the glycosyltransferase 4 family. MraY subfamily. Requires Mg(2+) as cofactor.

It is found in the cell membrane. It carries out the reaction UDP-N-acetyl-alpha-D-muramoyl-L-alanyl-gamma-D-glutamyl-L-lysyl-D-alanyl-D-alanine + di-trans,octa-cis-undecaprenyl phosphate = Mur2Ac(oyl-L-Ala-gamma-D-Glu-L-Lys-D-Ala-D-Ala)-di-trans,octa-cis-undecaprenyl diphosphate + UMP. The protein operates within cell wall biogenesis; peptidoglycan biosynthesis. Functionally, catalyzes the initial step of the lipid cycle reactions in the biosynthesis of the cell wall peptidoglycan: transfers peptidoglycan precursor phospho-MurNAc-pentapeptide from UDP-MurNAc-pentapeptide onto the lipid carrier undecaprenyl phosphate, yielding undecaprenyl-pyrophosphoryl-MurNAc-pentapeptide, known as lipid I. The sequence is that of Phospho-N-acetylmuramoyl-pentapeptide-transferase from Streptococcus equi subsp. zooepidemicus (strain MGCS10565).